Reading from the N-terminus, the 89-residue chain is Ubiquinol-cytochrome-c reductase complex assembly factor 3 (89 aa).

The Mitochondrial matrix segment spans residues 1–7 (MEAARKA). The chain crosses the membrane as a helical span at residues 8 to 28 (LAVVAVLGAGGGVGSILFALV). A mediates lipid-binding region spans residues 23-80 (ILFALVTPGELQKQLMLQEMPERDSRRRDEAVRTKELVMATLKDAAATKENVAWRRNW). Over 29–89 (TPGELQKQLM…WTVRGDGRSA (61 aa)) the chain is Mitochondrial intermembrane.

Belongs to the UQCC3 family. As to quaternary structure, associates with the ubiquinol-cytochrome c reductase complex (mitochondrial respiratory chain complex III(CIII) or cytochrome b-c1 complex). Interacts with UQCC1. Forms a complex, named COMC, composed of UQCC1, UQCC2; UQCC3 and UQCC4; mediates MT-CYB hemylation and association with the first nuclear-encoded complex III subunit UQCRQ. Probably cleaved by OMA1 under mitochondrial stress conditions.

The protein resides in the mitochondrion inner membrane. Functionally, required for the assembly of the ubiquinol-cytochrome c reductase complex (mitochondrial respiratory chain complex III or cytochrome b-c1 complex), mediating cytochrome b recruitment and probably stabilization within the complex. Thereby, plays an important role in ATP production by mitochondria. Cardiolipin-binding protein, it may also control the cardiolipin composition of mitochondria membranes and their morphology. In Rattus norvegicus (Rat), this protein is Ubiquinol-cytochrome-c reductase complex assembly factor 3.